The following is a 614-amino-acid chain: MEISLMKFLFLGIWVYYYSVLDSVSAMDSLLSPKGVNYEVAALMSVKNKMKDEKEVLSGWDINSVDPCTWNMVGCSSEGFVVSLEMASKGLSGILSTSIGELTHLHTLLLQNNQLTGPIPSELGQLSELETLDLSGNRFSGEIPASLGFLTHLNYLRLSRNLLSGQVPHLVAGLSGLSFLDLSFNNLSGPTPNISAKDYRIVGNAFLCGPASQELCSDATPVRNATGLSEKDNSKHHSLVLSFAFGIVVAFIISLMFLFFWVLWHRSRLSRSHVQQDYEFEIGHLKRFSFREIQTATSNFSPKNILGQGGFGMVYKGYLPNGTVVAVKRLKDPIYTGEVQFQTEVEMIGLAVHRNLLRLFGFCMTPEERMLVYPYMPNGSVADRLRDNYGEKPSLDWNRRISIALGAARGLVYLHEQCNPKIIHRDVKAANILLDESFEAIVGDFGLAKLLDQRDSHVTTAVRGTIGHIAPEYLSTGQSSEKTDVFGFGVLILELITGHKMIDQGNGQVRKGMILSWVRTLKAEKRFAEMVDRDLKGEFDDLVLEEVVELALLCTQPHPNLRPRMSQVLKVLEGLVEQCEGGYEARAPSVSRNYSNGHEEQSFIIEAIELSGPR.

Residues Met-1–Ala-26 form the signal peptide. Residues Met-27–Ser-242 are Extracellular-facing. 4 LRR repeats span residues His-104 to Leu-126, Glu-128 to Thr-151, His-152 to Leu-174, and Gly-176 to Lys-197. N-linked (GlcNAc...) asparagine glycosylation is found at Asn-186, Asn-193, and Asn-224. Residues Phe-243 to Leu-263 traverse the membrane as a helical segment. The Cytoplasmic segment spans residues Trp-264–Arg-614. Position 297 is a phosphothreonine (Thr-297). Positions Phe-300 to Val-576 constitute a Protein kinase domain. Leu-306 to Val-314 is an ATP binding site. Thr-323 bears the Phosphothreonine mark. Residue Lys-328 participates in ATP binding. Ser-380 is modified (phosphoserine). The active-site Proton acceptor is the Asp-426. 3 positions are modified to phosphothreonine: Thr-459, Thr-460, and Thr-465. At Tyr-473 the chain carries Phosphotyrosine. Ser-475 carries the phosphoserine modification. A Phosphothreonine modification is found at Thr-476. Ser-480 is subject to Phosphoserine. Phosphothreonine is present on Thr-555.

Belongs to the protein kinase superfamily. Ser/Thr protein kinase family.

The protein resides in the membrane. The catalysed reaction is L-seryl-[protein] + ATP = O-phospho-L-seryl-[protein] + ADP + H(+). It catalyses the reaction L-threonyl-[protein] + ATP = O-phospho-L-threonyl-[protein] + ADP + H(+). The sequence is that of Probable LRR receptor-like serine/threonine-protein kinase At5g45780 from Arabidopsis thaliana (Mouse-ear cress).